Consider the following 120-residue polypeptide: MGKRKSRAKPAPTKRMDKLDTIFSCPFCNHGSSVECIIDMKHLIGKAACRICEESFSTTITALTEAIDIYSEWIDECERVNTAEDDVVQEEEEEVEEEEEEEEEEDDEDDHVSVKRKYNF.

4 residues coordinate Zn(2+): Cys25, Cys28, Cys49, and Cys52. Acidic residues predominate over residues 84-110 (EDDVVQEEEEEVEEEEEEEEEEDDEDD). The tract at residues 84–120 (EDDVVQEEEEEVEEEEEEEEEEDDEDDHVSVKRKYNF) is disordered.

Belongs to the ELOF1 family.

The protein resides in the nucleus. Transcription elongation factor implicated in the maintenance of proper chromatin structure in actively transcribed regions. This is Transcription elongation factor 1 homolog from Arabidopsis thaliana (Mouse-ear cress).